The chain runs to 204 residues: WW domain-containing protein C11B10.08 (204 aa).

The 37-residue stretch at 7-43 (EGLPNGWVAQWDERYKCYFYVNESDPKAKPQWECPVR) folds into the WW domain. The segment at 32–117 (PKAKPQWECP…GYPQQPYYYP (86 aa)) is disordered. 2 stretches are compositionally biased toward low complexity: residues 66 to 100 (YSNS…GAAP) and 108 to 117 (GYPQQPYYYP).

The protein localises to the cytoplasm. The protein resides in the nucleus. This is WW domain-containing protein C11B10.08 from Schizosaccharomyces pombe (strain 972 / ATCC 24843) (Fission yeast).